Reading from the N-terminus, the 318-residue chain is MVDNNKTVDNNYKHTSVLLDEAVKGLNIRDNGIYIDGTFGRGGHSRLILSQLGPEGRLIAIDRDPEAIEAAKQITDPRFSIVHGPFSDLAHYVRDLDLVGRIDGILLDLGVSSPQLDDAERGFSFMRDGPLDMRMDPSRGLSAAEWLMKASADDIAWVLKTFGEERFAKRLAKAIVERNLTQPMTRTKELADLIANASPFRDKHPATRSFQAIRIYINSELEEIERALDGAHEVLAPEGRLSVISFHSLEDRIVKNFIRHHSRGPQVPAGLPLTEAQLRSMGGRTLKSVGKMMPGDAEIAENPRARSSVLRFAERIGE.

S-adenosyl-L-methionine is bound by residues 42–44 (GGH), Asp-62, Phe-86, Asp-108, and Gln-115.

The protein belongs to the methyltransferase superfamily. RsmH family.

It is found in the cytoplasm. It catalyses the reaction cytidine(1402) in 16S rRNA + S-adenosyl-L-methionine = N(4)-methylcytidine(1402) in 16S rRNA + S-adenosyl-L-homocysteine + H(+). In terms of biological role, specifically methylates the N4 position of cytidine in position 1402 (C1402) of 16S rRNA. This is Ribosomal RNA small subunit methyltransferase H from Yersinia pestis (strain Pestoides F).